The sequence spans 121 residues: Small ribosomal subunit protein uS13 (121 aa).

Positions 94–121 are disordered; it reads GLPVRGQKTRNNAHTVKGKPKAIAGKKK. Basic residues predominate over residues 109–121; sequence VKGKPKAIAGKKK.

The protein belongs to the universal ribosomal protein uS13 family. In terms of assembly, part of the 30S ribosomal subunit. Forms a loose heterodimer with protein S19. Forms two bridges to the 50S subunit in the 70S ribosome.

Functionally, located at the top of the head of the 30S subunit, it contacts several helices of the 16S rRNA. In the 70S ribosome it contacts the 23S rRNA (bridge B1a) and protein L5 of the 50S subunit (bridge B1b), connecting the 2 subunits; these bridges are implicated in subunit movement. Contacts the tRNAs in the A and P-sites. This chain is Small ribosomal subunit protein uS13, found in Onion yellows phytoplasma (strain OY-M).